A 160-amino-acid chain; its full sequence is Cyclic di-GMP-binding protein Smlt4090 (160 aa).

Residues K33, K132, R134, D135, and D160 each contribute to the 3',3'-c-di-GMP site.

This sequence belongs to the YajQ family.

In terms of biological role, cyclic di-GMP effector that significantly contributes to virulence. Binds bis-(3',5')-cyclic diguanylate (cyclic di-GMP or c-di-GMP), an important bacterial second messenger that controls a wide range of cellular processes. In Stenotrophomonas maltophilia (strain K279a), this protein is Cyclic di-GMP-binding protein Smlt4090.